We begin with the raw amino-acid sequence, 88 residues long: Sm-like protein LSM5 (88 aa).

Residue Ala2 is modified to N-acetylalanine. In terms of domain architecture, Sm spans 9-84 (LPSELIDRCI…IAILVPGGSP (76 aa)).

The protein belongs to the snRNP Sm proteins family. As to quaternary structure, component of the heptameric LSM1-LSM7 complex that forms a seven-membered ring structure with a donut shape. The LSM subunits are arranged in the order LSM1, LSM2, LSM3, LSM6, LSM5, LSM7 and LSM4. Component of the heptameric LSM2-LSM8 complex that forms a seven-membered ring structure with a donut shape. The LSM subunits are arranged in the order LSM8, LSM2, LSM3, LSM6, LSM5, LSM7 and LSM4. LSM2 subunit interacts only with its two neighboring subunits, LSM6A or LSM6B and LSM7. As to expression, expressed in roots, leaves, stems, flowers and siliques.

Its subcellular location is the cytoplasm. The protein resides in the nucleus. In terms of biological role, component of LSM protein complexes, which are involved in RNA processing. Component of the cytoplasmic LSM1-LSM7 complex which is involved in mRNA degradation by promoting decapping and leading to accurate 5'-3' mRNA decay. The cytoplasmic LSM1-LSM7 complex regulates developmental gene expression by the decapping of specific development-related transcripts. Component of the nuclear LSM2-LSM8 complex which is involved splicing nuclear mRNAs. LSM2-LSM8 binds directly to the U6 small nuclear RNAs (snRNAs) and is essential for accurate splicing of selected development-related mRNAs through the stabilization of the spliceosomal U6 snRNA. Plays a critical role in the regulation of development-related gene expression. Involved in the control of plant sensitivity to abscisic acid (ABA) and drought. Functions with ABH1 as negative regulator of ABA signaling in guard cells. Required for regulation of splicing efficiency of many stress-responsive genes under stress conditions. The polypeptide is Sm-like protein LSM5 (Arabidopsis thaliana (Mouse-ear cress)).